A 376-amino-acid chain; its full sequence is UDP-4-amino-4,6-dideoxy-N-acetyl-beta-L-altrosamine transaminase (376 aa).

Residues tyrosine 4, 24–27 (EILT), alanine 54, and serine 176 contribute to the substrate site. Lysine 181 carries the post-translational modification N6-(pyridoxal phosphate)lysine. Residues asparagine 226 and 311 to 314 (QVHY) contribute to the substrate site.

Belongs to the DegT/DnrJ/EryC1 family.

The enzyme catalyses UDP-4-amino-4,6-dideoxy-N-acetyl-beta-L-altrosamine + 2-oxoglutarate = UDP-2-acetamido-2,6-dideoxy-beta-L-arabino-hex-4-ulose + L-glutamate. Its function is as follows. Catalyzes the second step in the biosynthesis of pseudaminic acid, a sialic-acid-like sugar that is used to modify flagellin. Uses UDP-2-acetamido-2,6-dideoxy-beta-L-arabino-4-hexulose as substrate producing UDP-4-amino-4,6-dideoxy-beta-L-AltNAc. The polypeptide is UDP-4-amino-4,6-dideoxy-N-acetyl-beta-L-altrosamine transaminase (pseC) (Campylobacter jejuni subsp. jejuni serotype O:2 (strain ATCC 700819 / NCTC 11168)).